Here is a 337-residue protein sequence, read N- to C-terminus: Putative 2-aminoethylphosphonate-binding periplasmic protein (337 aa).

The signal sequence occupies residues 1–21 (MKLSRLALLSVFALASAPSWA).

The protein belongs to the bacterial solute-binding protein 1 family.

Its subcellular location is the periplasm. Functionally, probably part of the PhnSTUV complex (TC 3.A.1.11.5) involved in 2-aminoethylphosphonate import. The sequence is that of Putative 2-aminoethylphosphonate-binding periplasmic protein (phnS) from Salmonella typhi.